Consider the following 273-residue polypeptide: ComE operon protein 4 (273 aa).

It belongs to the pyrroline-5-carboxylate reductase family.

Dispensable for transformability. Not known if it can act as a pyrroline-5-carboxylate reductase. The sequence is that of ComE operon protein 4 (comER) from Bacillus subtilis (strain 168).